We begin with the raw amino-acid sequence, 84 residues long: Large ribosomal subunit protein bL28 (84 aa).

The protein belongs to the bacterial ribosomal protein bL28 family.

This is Large ribosomal subunit protein bL28 from Deinococcus geothermalis (strain DSM 11300 / CIP 105573 / AG-3a).